A 409-amino-acid polypeptide reads, in one-letter code: tRNA(Met) cytidine acetate ligase (409 aa).

ATP contacts are provided by residues 7–20 (VVEYNPMHNGHLYH), Gly-102, Asn-169, and Arg-194.

Belongs to the TmcAL family.

It is found in the cytoplasm. It catalyses the reaction cytidine(34) in elongator tRNA(Met) + acetate + ATP = N(4)-acetylcytidine(34) in elongator tRNA(Met) + AMP + diphosphate. Its function is as follows. Catalyzes the formation of N(4)-acetylcytidine (ac(4)C) at the wobble position of elongator tRNA(Met), using acetate and ATP as substrates. First activates an acetate ion to form acetyladenylate (Ac-AMP) and then transfers the acetyl group to tRNA to form ac(4)C34. The polypeptide is tRNA(Met) cytidine acetate ligase (Clostridium botulinum (strain ATCC 19397 / Type A)).